The sequence spans 564 residues: Heat shock factor protein 2 (564 aa).

Residues 21-126 mediate DNA binding; it reads VPAFLSKLWA…LLEHIKRKVS (106 aa). Positions 133 to 206 are hydrophobic repeat HR-A/B; the sequence is NKISQEDLSK…VTLVQNNQLV (74 aa). The span at 271-280 shows a compositional bias: acidic residues; the sequence is EENTMVDEEN. Disordered stretches follow at residues 271 to 301 and 320 to 347; these read EENT…CSRS and QGDK…SPLM. Residues 390–415 form a hydrophobic repeat HR-C region; the sequence is LLDYLDSIDCSLEDFQAMLSGRQFSI. A compositionally biased stretch (polar residues) spans 448–465; the sequence is TTKSNAGPAASQETQVSK. Residues 448–468 are disordered; it reads TTKSNAGPAASQETQVSKPKS.

This sequence belongs to the HSF family. Homotrimer. In terms of tissue distribution, expressed in most tissues with the exceptions of blood and liver.

It is found in the cytoplasm. The protein localises to the nucleus. DNA-binding protein that specifically binds heat shock promoter elements (HSE) and activates transcription. HSF2 shows constitutive DNA binding activity, even without heat shock. This chain is Heat shock factor protein 2 (HSF2), found in Gallus gallus (Chicken).